The chain runs to 383 residues: Succinyl-diaminopimelate desuccinylase (383 aa).

His-74 contacts Zn(2+). Asp-76 is a catalytic residue. Asp-107 contacts Zn(2+). The active-site Proton acceptor is Glu-141. Glu-142, Glu-170, and His-356 together coordinate Zn(2+).

It belongs to the peptidase M20A family. DapE subfamily. Homodimer. Requires Zn(2+) as cofactor. Co(2+) serves as cofactor.

It carries out the reaction N-succinyl-(2S,6S)-2,6-diaminopimelate + H2O = (2S,6S)-2,6-diaminopimelate + succinate. It participates in amino-acid biosynthesis; L-lysine biosynthesis via DAP pathway; LL-2,6-diaminopimelate from (S)-tetrahydrodipicolinate (succinylase route): step 3/3. Functionally, catalyzes the hydrolysis of N-succinyl-L,L-diaminopimelic acid (SDAP), forming succinate and LL-2,6-diaminopimelate (DAP), an intermediate involved in the bacterial biosynthesis of lysine and meso-diaminopimelic acid, an essential component of bacterial cell walls. This Cupriavidus necator (strain ATCC 17699 / DSM 428 / KCTC 22496 / NCIMB 10442 / H16 / Stanier 337) (Ralstonia eutropha) protein is Succinyl-diaminopimelate desuccinylase.